The following is a 49-amino-acid chain: Turripeptide OL47 (49 aa).

Residues 28–49 (RSDTEKKCTGGPDPCPPRQWPD) form a disordered region. A compositionally biased stretch (pro residues) spans 40–49 (DPCPPRQWPD).

In terms of processing, contains 4 disulfide bonds. As to expression, expressed by the venom duct.

Its subcellular location is the secreted. Functionally, acts as a neurotoxin by inhibiting an ion channel. This Iotyrris olangoensis (Sea snail) protein is Turripeptide OL47.